The sequence spans 559 residues: MVSKLTSLQQELLSALLSSGVTKEVLVQALEELLPSPSFGVKLETLPLSPGSGTEPDTKPVFHTLTNGHAKGRLSGDEGSEDGDDYDTPPILKELQALNTEEAADDGAEVDRMLSEDPWRAAKMIKGYMQQHNIPQREVVDVTGLNQSHLSQHLNKGTPMKTQKRAALYTWYVRKQREILRQFNQTVQSSGNLTDKSSQDQLLFLFPEFSQQSQGPGQSDDACSEPTNKKMRRNRFKWGPASQQILYQAYDRQKNPSKEEREALVEECNRAECLQRGVSPSKAHGLGSNLVTEVRVYNWFANRRKEEEAFRQKLAMDAYSSNQTHSLNTLLSHSSPHHQPSTSPPNKLPGVRYNQQGNNEVTSSSTISHHGNSAMVTSQSVLQQVSPASLDPGHNLLSPDGKMQISVSGGGLPPVSTLTNIHSLSHHNPQQSQNLIMTPLSGVMAIAQSLNSSQAQSVPVINSVAGSLAALQPVQFSQQLHSPHQQPLMQQSPGSHMAQQPFMAAVTQLQNSHMYTHKQEPPQYSHTSRFPPAMVVTDTSSISTLTNMSSSKQCPLQAW.

Positions 1–31 (MVSKLTSLQQELLSALLSSGVTKEVLVQALE) are dimerization. The HNF-p1 domain occupies 1-32 (MVSKLTSLQQELLSALLSSGVTKEVLVQALEE). Phosphoserine is present on residues Ser-49, Ser-52, Ser-75, and Ser-80. Residues 93–188 (KELQALNTEE…ILRQFNQTVQ (96 aa)) form the POU-specific atypical domain. The homeobox; HNF1-type DNA-binding region spans 231 to 312 (MRRNRFKWGP…RRKEEEAFRQ (82 aa)). The segment covering 328–341 (NTLLSHSSPHHQPS) has biased composition (low complexity). The segment at 328–371 (NTLLSHSSPHHQPSTSPPNKLPGVRYNQQGNNEVTSSSTISHHG) is disordered. Residues 353 to 371 (YNQQGNNEVTSSSTISHHG) show a composition bias toward polar residues.

It belongs to the HNF1 homeobox family. Binds DNA as a dimer. Can form homodimer or heterodimer with HNF1-alpha. Interacts (via HNF-p1 domain) with PCBD1; the interaction increases its transactivation activity.

The protein localises to the nucleus. Its function is as follows. Transcription factor that binds to the inverted palindrome 5'-GTTAATNATTAAC-3'. Binds to the FPC element in the cAMP regulatory unit of the PLAU gene. Transcriptional activity is increased by coactivator PCBD1. In Sus scrofa (Pig), this protein is Hepatocyte nuclear factor 1-beta (HNF1B).